The following is a 302-amino-acid chain: Probable 2-(5''-triphosphoribosyl)-3'-dephosphocoenzyme-A synthase (302 aa).

The protein belongs to the CitG/MdcB family.

The enzyme catalyses 3'-dephospho-CoA + ATP = 2'-(5''-triphospho-alpha-D-ribosyl)-3'-dephospho-CoA + adenine. The chain is Probable 2-(5''-triphosphoribosyl)-3'-dephosphocoenzyme-A synthase from Salmonella gallinarum (strain 287/91 / NCTC 13346).